The sequence spans 343 residues: Anthranilate 1,2-dioxygenase electron transfer component (343 aa).

The 94-residue stretch at 3-96 folds into the 2Fe-2S ferredoxin-type domain; that stretch reads HSVALNFADG…NAAFYFDHHS (94 aa). [2Fe-2S] cluster is bound by residues cysteine 40, cysteine 45, cysteine 48, and cysteine 80. Residues 98–338 are ferredoxin-reductase; it reads ICNAGETLKI…HIYSEKFLQS (241 aa). The region spanning 103–206 is the FAD-binding FR-type domain; that stretch reads ETLKIATVVT…EAPLGSFYLR (104 aa).

This sequence belongs to the bacterial ring-hydroxylating dioxygenase ferredoxin reductase family. As to quaternary structure, monomer. It is part of the anthranilate dioxygenase two component enzyme system. The other component is an oxygenase component consisting of 3 large (AntA) and 3 small (AntB) subunits. FAD is required as a cofactor. [2Fe-2S] cluster serves as cofactor.

The catalysed reaction is 2 reduced [2Fe-2S]-[ferredoxin] + NAD(+) + H(+) = 2 oxidized [2Fe-2S]-[ferredoxin] + NADH. It functions in the pathway aromatic compound metabolism; anthranilate degradation via hydroxylation; catechol from anthranilate: step 1/1. In terms of biological role, electron transfer component of anthranilate 1,2-dioxygenase system. The chain is Anthranilate 1,2-dioxygenase electron transfer component from Acinetobacter baylyi (strain ATCC 33305 / BD413 / ADP1).